A 456-amino-acid polypeptide reads, in one-letter code: MDKRFAVILAAGKGTRMKSKLYKVLHPVCGKPMVEHVADEALKLSLAKLVTIVGHGAEDVKKQLGQKSDYALQAEQLGTAHAVKQAKPFLHGEKGVTIVICGDTPLLTAETMEAMLNEHTDKGAKATVLTAVADDPAGYGRIIRSEDGAVQKIVEHKDASEQERLVKEINTGTYCFDNEALFRVIEQVSNENAQGEYYLPDVIEILKDEGETVAAYQTGNFQETLGVNDRVALSQAEMYMKERINKRHMQNGVTLIDPMNTYISPDARIGQDTVIYPGTVLKGQAEIGDECVIGPHTEIEDSSIGSRTVIKQSVVNRSKVGNDVNIGPFAHIRPDSAIGNEVKIGNFVEIKKTQFGDRSKASHLSYIGDAEVGTDVNLGCGSITVNYDGKKKYLTKIEDGAFIGCNSNLVAPVTVGEGAYVAAGSTVTEDVPGEALAIARARQVNKEDYVKNIHKK.

Positions 1–230 (MDKRFAVILA…FQETLGVNDR (230 aa)) are pyrophosphorylase. Residues 9–12 (LAAG), lysine 23, glutamine 73, and 78–79 (GT) contribute to the UDP-N-acetyl-alpha-D-glucosamine site. Aspartate 103 is a Mg(2+) binding site. The UDP-N-acetyl-alpha-D-glucosamine site is built by glycine 140, glutamate 155, asparagine 170, and asparagine 228. Asparagine 228 lines the Mg(2+) pocket. The linker stretch occupies residues 231-251 (VALSQAEMYMKERINKRHMQN). The interval 252 to 456 (GVTLIDPMNT…EDYVKNIHKK (205 aa)) is N-acetyltransferase. Positions 333 and 351 each coordinate UDP-N-acetyl-alpha-D-glucosamine. Residue histidine 363 is the Proton acceptor of the active site. The UDP-N-acetyl-alpha-D-glucosamine site is built by tyrosine 366 and asparagine 377. Acetyl-CoA contacts are provided by residues 386–387 (NY), alanine 423, and arginine 440.

It in the N-terminal section; belongs to the N-acetylglucosamine-1-phosphate uridyltransferase family. This sequence in the C-terminal section; belongs to the transferase hexapeptide repeat family. In terms of assembly, homotrimer. Mg(2+) serves as cofactor.

It localises to the cytoplasm. It catalyses the reaction alpha-D-glucosamine 1-phosphate + acetyl-CoA = N-acetyl-alpha-D-glucosamine 1-phosphate + CoA + H(+). The catalysed reaction is N-acetyl-alpha-D-glucosamine 1-phosphate + UTP + H(+) = UDP-N-acetyl-alpha-D-glucosamine + diphosphate. It functions in the pathway nucleotide-sugar biosynthesis; UDP-N-acetyl-alpha-D-glucosamine biosynthesis; N-acetyl-alpha-D-glucosamine 1-phosphate from alpha-D-glucosamine 6-phosphate (route II): step 2/2. The protein operates within nucleotide-sugar biosynthesis; UDP-N-acetyl-alpha-D-glucosamine biosynthesis; UDP-N-acetyl-alpha-D-glucosamine from N-acetyl-alpha-D-glucosamine 1-phosphate: step 1/1. Its pathway is bacterial outer membrane biogenesis; LPS lipid A biosynthesis. In terms of biological role, catalyzes the last two sequential reactions in the de novo biosynthetic pathway for UDP-N-acetylglucosamine (UDP-GlcNAc). The C-terminal domain catalyzes the transfer of acetyl group from acetyl coenzyme A to glucosamine-1-phosphate (GlcN-1-P) to produce N-acetylglucosamine-1-phosphate (GlcNAc-1-P), which is converted into UDP-GlcNAc by the transfer of uridine 5-monophosphate (from uridine 5-triphosphate), a reaction catalyzed by the N-terminal domain. This is Bifunctional protein GlmU from Bacillus velezensis (strain DSM 23117 / BGSC 10A6 / LMG 26770 / FZB42) (Bacillus amyloliquefaciens subsp. plantarum).